A 764-amino-acid chain; its full sequence is Hemocyte protein-glutamine gamma-glutamyltransferase (764 aa).

Catalysis depends on residues C343, H402, and D425. Residues N465, D467, E522, and E527 each contribute to the Ca(2+) site.

The protein belongs to the transglutaminase superfamily. Transglutaminase family. It depends on Ca(2+) as a cofactor. Mainly expressed in hemocytes, hepatopancreas, and gastric tissues. On the other hand nothing was detected in the heart, intestine and muscle.

It localises to the membrane. The catalysed reaction is L-glutaminyl-[protein] + L-lysyl-[protein] = [protein]-L-lysyl-N(6)-5-L-glutamyl-[protein] + NH4(+). Functionally, catalyzes the cross-linking of proteins and the conjugation of polyamines to proteins. This is Hemocyte protein-glutamine gamma-glutamyltransferase from Tachypleus tridentatus (Japanese horseshoe crab).